Here is a 413-residue protein sequence, read N- to C-terminus: Arginine biosynthesis bifunctional protein ArgJ (413 aa).

Substrate contacts are provided by threonine 160, lysine 186, threonine 197, glutamate 284, asparagine 408, and serine 413. The Nucleophile role is filled by threonine 197.

It belongs to the ArgJ family. Heterotetramer of two alpha and two beta chains.

The protein resides in the cytoplasm. It carries out the reaction N(2)-acetyl-L-ornithine + L-glutamate = N-acetyl-L-glutamate + L-ornithine. It catalyses the reaction L-glutamate + acetyl-CoA = N-acetyl-L-glutamate + CoA + H(+). The protein operates within amino-acid biosynthesis; L-arginine biosynthesis; L-ornithine and N-acetyl-L-glutamate from L-glutamate and N(2)-acetyl-L-ornithine (cyclic): step 1/1. It functions in the pathway amino-acid biosynthesis; L-arginine biosynthesis; N(2)-acetyl-L-ornithine from L-glutamate: step 1/4. Catalyzes two activities which are involved in the cyclic version of arginine biosynthesis: the synthesis of N-acetylglutamate from glutamate and acetyl-CoA as the acetyl donor, and of ornithine by transacetylation between N(2)-acetylornithine and glutamate. The sequence is that of Arginine biosynthesis bifunctional protein ArgJ from Burkholderia pseudomallei (strain 1710b).